A 247-amino-acid polypeptide reads, in one-letter code: Probable enoyl-CoA hydratase echA6 (247 aa).

Belongs to the enoyl-CoA hydratase/isomerase family.

It carries out the reaction a (3S)-3-hydroxyacyl-CoA = a (2E)-enoyl-CoA + H2O. It catalyses the reaction a 4-saturated-(3S)-3-hydroxyacyl-CoA = a (3E)-enoyl-CoA + H2O. Its function is as follows. Could possibly oxidize fatty acids using specific components. This is Probable enoyl-CoA hydratase echA6 (echA6) from Mycobacterium leprae (strain TN).